The primary structure comprises 502 residues: UDP-glucuronosyltransferase 2C1 (502 aa).

2 N-linked (GlcNAc...) asparagine glycosylation sites follow: Asn177 and Asn288. A helical transmembrane segment spans residues 466–481 (VVVFLLTCVATIIFLA).

Belongs to the UDP-glycosyltransferase family.

It localises to the microsome membrane. The protein localises to the endoplasmic reticulum membrane. It catalyses the reaction glucuronate acceptor + UDP-alpha-D-glucuronate = acceptor beta-D-glucuronoside + UDP + H(+). Functionally, UDPGT is of major importance in the conjugation and subsequent elimination of potentially toxic xenobiotics and endogenous compounds. The chain is UDP-glucuronosyltransferase 2C1 (UGT2C1) from Oryctolagus cuniculus (Rabbit).